A 221-amino-acid chain; its full sequence is 7-cyano-7-deazaguanine synthase (221 aa).

An ATP-binding site is contributed by 7–17; that stretch reads LSGGLDSAVSL. Zn(2+) is bound by residues C192, C200, C203, and C206.

The protein belongs to the QueC family. In terms of assembly, homodimer. Requires Zn(2+) as cofactor.

It carries out the reaction 7-carboxy-7-deazaguanine + NH4(+) + ATP = 7-cyano-7-deazaguanine + ADP + phosphate + H2O + H(+). It functions in the pathway purine metabolism; 7-cyano-7-deazaguanine biosynthesis. Its function is as follows. Catalyzes the ATP-dependent conversion of 7-carboxy-7-deazaguanine (CDG) to 7-cyano-7-deazaguanine (preQ(0)). This chain is 7-cyano-7-deazaguanine synthase, found in Pelotomaculum thermopropionicum (strain DSM 13744 / JCM 10971 / SI).